The following is a 147-amino-acid chain: UPF0178 protein IL2341 (147 aa).

This sequence belongs to the UPF0178 family.

The polypeptide is UPF0178 protein IL2341 (Idiomarina loihiensis (strain ATCC BAA-735 / DSM 15497 / L2-TR)).